A 133-amino-acid chain; its full sequence is Capsid protein (133 aa).

The protein belongs to the Leviviricetes capsid protein family. As to quaternary structure, homodimer. The capsid protein dimer binds to the viral RNA via an operator hairpin, but also many other RNA sequences in the viral genome.

The protein localises to the virion. Functionally, capsid protein self-assembles to form an icosahedral capsid with a T=3 symmetry, about 26 nm in diameter, and consisting of 89 capsid proteins dimers (178 capsid proteins). Involved in viral genome encapsidation through the interaction between a capsid protein dimer and the multiple packaging signals present in the RNA genome. Binding of the capsid proteins to the viral RNA induces a conformational change required for efficient T=3 shell formation. The capsid also contains 1 copy of the A2 maturation protein. Acts as a translational repressor of viral replicase synthesis late in infection. This latter function is the result of capsid protein interaction with an RNA hairpin which contains the replicase ribosome-binding site. In Escherichia coli, this protein is Capsid protein.